The chain runs to 148 residues: Probable calcium-binding protein CML7 (148 aa).

EF-hand domains follow at residues 9-44, 80-115, and 116-148; these read EQVASMREAFSLFDTDGDGRIAPSELGVLMRSLGGN, PFDRPLRDAFRVLDKDASGTVSVADLRHVLTSIGEK, and LEPHEFDEWIREVDVAPDGTIRYDDFIRRIVAK. 10 residues coordinate Ca(2+): D22, D24, D26, R28, E33, D93, D95, S97, T99, and D104.

Potential calcium sensor. This chain is Probable calcium-binding protein CML7 (CML7), found in Oryza sativa subsp. japonica (Rice).